We begin with the raw amino-acid sequence, 1113 residues long: Myosin-binding protein 1 (1113 aa).

Residues 12-34 (LAFNEWLLMFMLFVNSIFSYVIA) traverse the membrane as a helical segment. Residues 209 to 229 (ESEAVFSDTEPKQESSLNHLP) form a disordered region. The GTD-binding domain maps to 888–986 (SEGDRLKRQV…DLEAEIEYFR (99 aa)).

In terms of assembly, interacts with myosin XI-K, XI-I and XI-1. In terms of tissue distribution, expressed in leaf epidermal cells, roots and root hairs.

Its subcellular location is the endomembrane system. In terms of biological role, membrane-anchored myosin receptors that define a distinct, plant-specific transport vesicle compartment. The polypeptide is Myosin-binding protein 1 (Arabidopsis thaliana (Mouse-ear cress)).